The primary structure comprises 534 residues: uncharacterized protein (534 aa).

The next 2 membrane-spanning stretches (helical) occupy residues 149–169 and 185–205; these read ILTT…SITI and VFLV…SLIF.

It localises to the cell membrane. This is an uncharacterized protein from Mycoplasma pneumoniae (strain ATCC 29342 / M129 / Subtype 1) (Mycoplasmoides pneumoniae).